Here is a 110-residue protein sequence, read N- to C-terminus: Pathogenesis-related protein (110 aa).

Residues alanine 1–alanine 19 form the signal peptide.

The protein belongs to the thaumatin family.

This chain is Pathogenesis-related protein, found in Juniperus virginiana (Eastern redcedar).